We begin with the raw amino-acid sequence, 231 residues long: Large ribosomal subunit protein uL1 (231 aa).

The protein belongs to the universal ribosomal protein uL1 family. As to quaternary structure, part of the 50S ribosomal subunit.

In terms of biological role, binds directly to 23S rRNA. The L1 stalk is quite mobile in the ribosome, and is involved in E site tRNA release. Functionally, protein L1 is also a translational repressor protein, it controls the translation of the L11 operon by binding to its mRNA. The polypeptide is Large ribosomal subunit protein uL1 (Pseudomonas syringae pv. tomato (strain ATCC BAA-871 / DC3000)).